The primary structure comprises 63 residues: Large ribosomal subunit protein bL28 (63 aa).

This sequence belongs to the bacterial ribosomal protein bL28 family.

The polypeptide is Large ribosomal subunit protein bL28 (Desulfitobacterium hafniense (strain DSM 10664 / DCB-2)).